Here is an 881-residue protein sequence, read N- to C-terminus: EEF1AKMT4-ECE2 readthrough transcript protein (881 aa).

The methyltransferase-like region stretch occupies residues Met1 to Glu160. The Cytoplasmic portion of the chain corresponds to Met1–Glu178. Residues Trp26 and Tyr30 each contribute to the S-adenosyl-L-methionine site. A Phosphotyrosine modification is found at Tyr39. S-adenosyl-L-methionine-binding positions include Trp41, Gly66, Asp88 to Tyr89, Asp113 to Val114, and Lys130. Position 174 is a phosphoserine (His174). The chain crosses the membrane as a helical; Signal-anchor for type II membrane protein span at residues Leu179 to Leu199. The Lumenal portion of the chain corresponds to Trp200–Trp881. The region spanning Thr209–Trp881 is the Peptidase M13 domain. 5 disulfide bridges follow: Cys210/Cys215, Cys233/Cys866, Cys241/Cys826, Cys297/Cys546, and Cys755/Cys878. Residues Asn277, Asn281, Asn322, Asn382, Asn427, Asn494, and Asn650 are each glycosylated (N-linked (GlcNAc...) asparagine). His718 serves as a coordination point for Zn(2+). The active site involves Glu719. Position 722 (His722) interacts with Zn(2+). Asn743 and Asn751 each carry an N-linked (GlcNAc...) asparagine glycan. Glu778 contacts Zn(2+). Asp782 (proton donor) is an active-site residue.

In the N-terminal section; belongs to the methyltransferase superfamily. This sequence in the C-terminal section; belongs to the peptidase M13 family. The cofactor is Zn(2+). As to expression, expressed at high levels in central nervous system. Expressed in adrenal glands, ovary and uterus, and at low levels in heart.

The protein localises to the golgi apparatus membrane. The protein resides in the cytoplasmic vesicle. It is found in the secretory vesicle membrane. The enzyme catalyses Hydrolysis of the 21-Trp-|-Val-22 bond in big endothelin to form endothelin 1.. Inhibited by phosphoramidon. In terms of biological role, converts big endothelin-1 to endothelin-1. May also have methyltransferase activity. May play a role in amyloid-beta processing. This is EEF1AKMT4-ECE2 readthrough transcript protein from Mus musculus (Mouse).